A 510-amino-acid chain; its full sequence is Maturase K (510 aa).

It belongs to the intron maturase 2 family. MatK subfamily.

The protein localises to the plastid. Its subcellular location is the chloroplast. Usually encoded in the trnK tRNA gene intron. Probably assists in splicing its own and other chloroplast group II introns. The chain is Maturase K from Mammillaria haageana (Cactus).